Here is a 103-residue protein sequence, read N- to C-terminus: NADH-quinone oxidoreductase subunit K 1 (103 aa).

The next 3 membrane-spanning stretches (helical) occupy residues 7-27 (ISWF…GFLF), 31-51 (IITV…SFVT), and 63-83 (LFTF…LAII).

The protein belongs to the complex I subunit 4L family. As to quaternary structure, NDH-1 is composed of 14 different subunits. Subunits NuoA, H, J, K, L, M, N constitute the membrane sector of the complex.

The protein resides in the cell inner membrane. The enzyme catalyses a quinone + NADH + 5 H(+)(in) = a quinol + NAD(+) + 4 H(+)(out). Functionally, NDH-1 shuttles electrons from NADH, via FMN and iron-sulfur (Fe-S) centers, to quinones in the respiratory chain. The immediate electron acceptor for the enzyme in this species is believed to be ubiquinone. Couples the redox reaction to proton translocation (for every two electrons transferred, four hydrogen ions are translocated across the cytoplasmic membrane), and thus conserves the redox energy in a proton gradient. This Solibacter usitatus (strain Ellin6076) protein is NADH-quinone oxidoreductase subunit K 1.